The following is a 94-amino-acid chain: Selenoprotein K (94 aa).

The chain crosses the membrane as a helical span at residues 20 to 42 (VSFLTDFFWGIAEFVVFFFKTLL). Residues 46-94 (VKKRRGYGSSSDSRYDDGRGPPGNPPRRMGRISHLRGPSPPPMAGGUGR) are disordered. Residue U92 is a non-standard amino acid, selenocysteine.

It belongs to the selenoprotein K family. As to quaternary structure, interacts with DERL1, DERL2, DERL3 and SELENOS. The SELENOK-SELENOS complex interacts with VCP. Interacts with ZDHHC6. In terms of processing, cleaved by CAPN2/m-calpain in resting macrophages but not in activated macrophages. Macrophage activation up-regulates expression of the calpain inhibitor CAST/calpastatin, resulting in inhibition of CAPN2 activity. Truncated SELENOK proteins produced by failed UGA/Sec decoding are ubiquitinated by the CRL2(KLHDC2) complex, which recognizes the diglycine (Gly-Gly) at the C-terminus of truncated SELENOK proteins. In terms of tissue distribution, high expression in spleen and intestine (at protein level). Expressed in a range of immune cells including T and B-cells and also in myeloid cells including macrophages, neutrophils and dendritic cells (at protein level).

Its subcellular location is the endoplasmic reticulum membrane. The protein resides in the cell membrane. Required for Ca(2+) flux in immune cells and plays a role in T-cell proliferation and in T-cell and neutrophil migration. Involved in endoplasmic reticulum-associated degradation (ERAD) of soluble glycosylated proteins. Required for palmitoylation and cell surface expression of CD36 and involved in macrophage uptake of low-density lipoprotein and in foam cell formation. Together with ZDHHC6, required for palmitoylation of ITPR1 in immune cells, leading to regulate ITPR1 stability and function. Plays a role in protection of cells from ER stress-induced apoptosis. Protects cells from oxidative stress when overexpressed in cardiomyocytes. This is Selenoprotein K from Mus musculus (Mouse).